Here is a 519-residue protein sequence, read N- to C-terminus: U3 small nucleolar RNA-associated protein 15 homolog (519 aa).

A2 carries the post-translational modification N-acetylalanine. WD repeat units follow at residues 36–75, 78–117, 120–159, 162–202, 204–242, 246–285, and 287–326; these read KEFG…PIKT, RFKD…PLRQ, GHTK…EILT, EHSD…SVIS, EHGQ…QLLV, NHHK…VVHS, and DYTA…KKDS. A Glycyl lysine isopeptide (Lys-Gly) (interchain with G-Cter in SUMO2) cross-link involves residue K249.

In terms of assembly, part of the small subunit (SSU) processome, composed of more than 70 proteins and the RNA chaperone small nucleolar RNA (snoRNA) U3. May be a component of the proposed t-UTP subcomplex of the ribosomal small subunit (SSU) processome containing at least UTP4, WDR43, HEATR1, UTP15, WDR75. Interacts directly with UTP4 and WDR43.

It is found in the nucleus. It localises to the nucleolus. Its function is as follows. Ribosome biogenesis factor. Involved in nucleolar processing of pre-18S ribosomal RNA. Required for optimal pre-ribosomal RNA transcription by RNA polymerase I. Part of the small subunit (SSU) processome, first precursor of the small eukaryotic ribosomal subunit. During the assembly of the SSU processome in the nucleolus, many ribosome biogenesis factors, an RNA chaperone and ribosomal proteins associate with the nascent pre-rRNA and work in concert to generate RNA folding, modifications, rearrangements and cleavage as well as targeted degradation of pre-ribosomal RNA by the RNA exosome. The chain is U3 small nucleolar RNA-associated protein 15 homolog from Bos taurus (Bovine).